The sequence spans 336 residues: Small ribosomal subunit protein uS2 (336 aa).

Belongs to the universal ribosomal protein uS2 family.

This Beijerinckia indica subsp. indica (strain ATCC 9039 / DSM 1715 / NCIMB 8712) protein is Small ribosomal subunit protein uS2.